Reading from the N-terminus, the 642-residue chain is MSTGAQSKAVVAGQHADGPRLLADVGGTNARFALETGPGEITQIRVYPGADYPTITDAIRKYLKDVKISRVNHAAIAIANPVDGDQVTMTNHDWSFSIEATRRALGFDTLLVVNDFTALAMALPGLTDAQRVQVGGGARRQNSVIGLLGPGTGLGVSGLIPADDRWIALGSEGGHASFAPQDEREDLVLQYARKKFPHVSFERVCAGPGMEIIYRALAARDKKRVAATVDTVEIVERAHAGDALALETVECFCGILGAFAGSVALTLGALGGVYIGGGVALKLGELFTRSSFRARFEAKGRFTHYLENIPTYLITAEYPAFLGVSAILAEQLSNRSGGASSAVFERIRQMRDALTPAERRVADLALNHPRSIINDPIVDIARKADVSQPTVIRFCRSLGCQGLSDFKLKLATGLTGTIPMSHSQVHLGDTATDFGAKVLDNTVSAILQLREHLNFEHVENAIEILNGARRIEFYGLGNSNIVAQDAHYKFFRFGIPTIAYGDLYMQAASAALLGKGDVIVAVSKSGRAPELLRVLDVAMQAGAKVIAITSSNTPLAKRATVALETDHIEMRESQLSMISRILHLLMIDILAVGVAIRRASTNGELPEAVAQAKARASDDETADVLDWLSHGASPAAKDVARD.

Residues 1–340 (MSTGAQSKAV…QLSNRSGGAS (340 aa)) are glucokinase. Residue 23 to 28 (ADVGGT) coordinates ATP. Positions 341 to 417 (SAVFERIRQM…LKLATGLTGT (77 aa)) constitute an HTH rpiR-type domain. Residues 341-642 (SAVFERIRQM…SPAAKDVARD (302 aa)) form a putative HTH-type transcriptional regulator region. Residues 377 to 396 (IVDIARKADVSQPTVIRFCR) constitute a DNA-binding region (H-T-H motif). Positions 461 to 600 (AIEILNGARR…AVGVAIRRAS (140 aa)) constitute an SIS domain. The chain crosses the membrane as a helical span at residues 576–596 (SMISRILHLLMIDILAVGVAI).

The protein in the N-terminal section; belongs to the bacterial glucokinase family.

The protein localises to the membrane. It carries out the reaction D-glucose + ATP = D-glucose 6-phosphate + ADP + H(+). This is Bifunctional protein glk (glk) from Burkholderia orbicola (strain AU 1054).